The chain runs to 402 residues: Protein HAIKU1 (402 aa).

4 disordered regions span residues 1–44, 63–135, 160–266, and 346–402; these read MDRP…LQTQ, TGSP…QQPM, SSLG…LVPS, and QPLT…WNDY. Polar residues predominate over residues 24–44; it reads LHQSTFAASTSNGAAPRLQTQ. Positions 55–64 match the VQ motif; that stretch reads FRSIVQQLTG. Residues 76–87 are compositionally biased toward polar residues; it reads QNNSLRPQNTRL. Residues 103–113 are compositionally biased toward pro residues; that stretch reads VPLPSMAPPQS. The segment covering 160 to 173 has biased composition (polar residues); the sequence is SSLGDSGPNANQMQ. Low complexity predominate over residues 218–240; the sequence is MPAQSQSQSQPQPQPQPQQHMMP. Residues 257 to 266 show a composition bias toward pro residues; that stretch reads YLPPPGLVPS. The span at 349-358 shows a compositional bias: polar residues; that stretch reads TPNFSFSQIA. The span at 371-380 shows a compositional bias: pro residues; sequence QGPPQPPPSP. Over residues 381-390 the composition is skewed to low complexity; the sequence is GLMFPLSPSG.

In terms of assembly, interacts with WRKY10. Interacts with MPK6.

The protein resides in the nucleus. Modulates seed size by negatively regulating the cellularization of syncytial endosperm. May function by binding and modulating the activity of WRKY10 transcription factor. The sequence is that of Protein HAIKU1 from Arabidopsis thaliana (Mouse-ear cress).